The primary structure comprises 80 residues: uncharacterized protein (80 aa).

The segment at glycine 57–isoleucine 80 is disordered.

This is an uncharacterized protein from Bacillus subtilis (strain 168).